Here is a 156-residue protein sequence, read N- to C-terminus: Cyclic pyranopterin monophosphate synthase (156 aa).

Residues 75 to 77 (LCH) and 111 to 112 (ME) contribute to the substrate site. Residue Asp-126 is part of the active site.

This sequence belongs to the MoaC family. Homohexamer; trimer of dimers.

It carries out the reaction (8S)-3',8-cyclo-7,8-dihydroguanosine 5'-triphosphate = cyclic pyranopterin phosphate + diphosphate. It functions in the pathway cofactor biosynthesis; molybdopterin biosynthesis. Functionally, catalyzes the conversion of (8S)-3',8-cyclo-7,8-dihydroguanosine 5'-triphosphate to cyclic pyranopterin monophosphate (cPMP). The sequence is that of Cyclic pyranopterin monophosphate synthase from Corynebacterium glutamicum (strain R).